A 476-amino-acid chain; its full sequence is Serine/threonine-protein kinase sax-1 (476 aa).

Residues 87 to 381 (FESLKVIGRG…LDEIKQCPFV (295 aa)) enclose the Protein kinase domain. Residues 93 to 101 (IGRGAFGEV) and Lys116 each bind ATP. Residue Asp210 is the Proton acceptor of the active site. The 71-residue stretch at 382–452 (KRIDWNHIRE…KRFDGLTQKM (71 aa)) folds into the AGC-kinase C-terminal domain.

Belongs to the protein kinase superfamily. AGC Ser/Thr protein kinase family. Mg(2+) is required as a cofactor. Widely expressed in embryonic and larval neurons that contribute axons to the nerve ring and in hypodermal cells, including lateral seam cells. Also displays a punctate localization in muscle.

It is found in the cytoplasm. The protein resides in the nucleus. The catalysed reaction is L-seryl-[protein] + ATP = O-phospho-L-seryl-[protein] + ADP + H(+). The enzyme catalyses L-threonyl-[protein] + ATP = O-phospho-L-threonyl-[protein] + ADP + H(+). Its function is as follows. Acts with sax-2 to restrict the growth of both primary and secondary neurites. Regulates mechanosensory tiling by controlling the termination point of sensory dendrites. In Caenorhabditis elegans, this protein is Serine/threonine-protein kinase sax-1.